Here is a 420-residue protein sequence, read N- to C-terminus: Putative sporulation-specific glycosylase YdhD (420 aa).

LysM domains are found at residues 2 to 45 (FIHI…ALLI) and 48 to 92 (YVYT…KITI). Residues 100 to 420 (AGTLSFYVLR…LRKFFTIRKV (321 aa)) form the GH18 domain. Glutamate 212 (proton donor) is an active-site residue.

This sequence belongs to the glycosyl hydrolase 18 family. Chitinase class II subfamily.

The protein localises to the spore wall. The polypeptide is Putative sporulation-specific glycosylase YdhD (ydhD) (Bacillus subtilis (strain 168)).